The chain runs to 303 residues: Peroxisomal trans-2-enoyl-CoA reductase (303 aa).

NADP(+) is bound at residue 23 to 47 (VTGGATGIGKAIVKELLELGSNVVI). At Lys-32 the chain carries N6-succinyllysine. At Ser-49 the chain carries Phosphoserine. Tyr-179 serves as the catalytic Proton acceptor. Tyr-179 bears the Phosphotyrosine mark. A Microbody targeting signal motif is present at residues 301-303 (AKL).

This sequence belongs to the short-chain dehydrogenases/reductases (SDR) family. In terms of assembly, interacts with PEX5, probably required to target it into peroxisomes.

The protein resides in the peroxisome. The catalysed reaction is a (2E)-enoyl-CoA + NADPH + H(+) = a 2,3-saturated acyl-CoA + NADP(+). The enzyme catalyses (2E)-decenoyl-CoA + NADPH + H(+) = decanoyl-CoA + NADP(+). It catalyses the reaction (2E)-hexenoyl-CoA + NADPH + H(+) = hexanoyl-CoA + NADP(+). It carries out the reaction (2E)-octenoyl-CoA + NADPH + H(+) = octanoyl-CoA + NADP(+). The catalysed reaction is (2E)-dodecenoyl-CoA + NADPH + H(+) = dodecanoyl-CoA + NADP(+). The enzyme catalyses (2E)-tetradecenoyl-CoA + NADPH + H(+) = tetradecanoyl-CoA + NADP(+). The protein operates within lipid metabolism; fatty acid biosynthesis. Participates in chain elongation of fatty acids. Catalyzes the reduction of trans-2-enoyl-CoAs of varying chain lengths from 6:1 to 16:1, having maximum activity with 10:1 CoA. Has no 2,4-dienoyl-CoA reductase activity. In Homo sapiens (Human), this protein is Peroxisomal trans-2-enoyl-CoA reductase.